Reading from the N-terminus, the 565-residue chain is Mediator of RNA polymerase II transcription subunit 17 (565 aa).

Residues 138 to 152 are compositionally biased toward polar residues; sequence TSLNSDRLGQDSNDN. The tract at residues 138–160 is disordered; that stretch reads TSLNSDRLGQDSNDNQESKATDS.

The protein belongs to the Mediator complex subunit 17 family. In terms of assembly, component of the Mediator complex.

Its subcellular location is the nucleus. Component of the Mediator complex, a coactivator involved in the regulated transcription of nearly all RNA polymerase II-dependent genes. Mediator functions as a bridge to convey information from gene-specific regulatory proteins to the basal RNA polymerase II transcription machinery. Mediator is recruited to promoters by direct interactions with regulatory proteins and serves as a scaffold for the assembly of a functional preinitiation complex with RNA polymerase II and the general transcription factors. The polypeptide is Mediator of RNA polymerase II transcription subunit 17 (SRB4) (Candida albicans (strain SC5314 / ATCC MYA-2876) (Yeast)).